The following is a 351-amino-acid chain: Meiotically up-regulated gene 1 protein (351 aa).

The protein localises to the cytoplasm. Required for correct meiotic chromosome segregation. This chain is Meiotically up-regulated gene 1 protein (mug1), found in Schizosaccharomyces pombe (strain 972 / ATCC 24843) (Fission yeast).